Here is a 485-residue protein sequence, read N- to C-terminus: Subtilisin-like protease 1 (485 aa).

Positions 1-19 (MGIFRFISISLAAVSAANA) are cleaved as a signal peptide. A propeptide spanning residues 20–116 (GHILSMGHAK…VEPDTTITIH (97 aa)) is cleaved from the precursor. In terms of domain architecture, Inhibitor I9 spans 34 to 116 (SYIVVMKDGT…VEPDTTITIH (83 aa)). The region spanning 126–400 (SWGLARISSQ…NILINNGDAK (275 aa)) is the Peptidase S8 domain. Catalysis depends on charge relay system residues Asp158 and His190. Asn251 carries an N-linked (GlcNAc...) asparagine glycan. Ser345 functions as the Charge relay system in the catalytic mechanism. Residues 377 to 394 (GTSSVTNPGPGTRTNILI) are compositionally biased toward polar residues. The disordered stretch occupies residues 377–462 (GTSSVTNPGP…HTPFPNDDFN (86 aa)). Residues 409-418 (PSQPPKPSQP) are compositionally biased toward pro residues. The segment covering 419–428 (SKPQQPSEPQ) has biased composition (low complexity). Positions 433-455 (PQEPAPGQPAPAPAPVPQHPHTP) are enriched in pro residues.

It belongs to the peptidase S8 family.

It is found in the secreted. Functionally, secreted subtilisin-like serine protease with keratinolytic activity that contributes to pathogenicity. The sequence is that of Subtilisin-like protease 1 (SUB1) from Arthroderma otae (strain ATCC MYA-4605 / CBS 113480) (Microsporum canis).